The chain runs to 247 residues: Uridylate kinase (247 aa).

14-17 (KLSG) contacts ATP. The interval 22 to 27 (GERGVG) is involved in allosteric activation by GTP. Position 56 (G56) interacts with UMP. G57 and R61 together coordinate ATP. Residues D76 and 137 to 144 (IGSPYFST) contribute to the UMP site. N165, Y171, and D174 together coordinate ATP.

Belongs to the UMP kinase family. In terms of assembly, homohexamer.

The protein localises to the cytoplasm. It catalyses the reaction UMP + ATP = UDP + ADP. It functions in the pathway pyrimidine metabolism; CTP biosynthesis via de novo pathway; UDP from UMP (UMPK route): step 1/1. Allosterically activated by GTP. Inhibited by UTP, 5-bromo-UTP and 5-iodo-UTP. In terms of biological role, catalyzes the reversible phosphorylation of UMP to UDP, with ATP as the most efficient phosphate donor. The sequence is that of Uridylate kinase (pyrH) from Streptococcus pneumoniae serotype 4 (strain ATCC BAA-334 / TIGR4).